A 352-amino-acid chain; its full sequence is Ly6/PLAUR domain-containing protein 3 (352 aa).

The N-terminal stretch at 1 to 32 (MDAARRGDTQPVMWTTRWLLLLPLLLCEGAQA) is a signal peptide. One can recognise a UPAR/Ly6 1 domain in the interval 35-128 (CYSCVQKADD…LNLTLRGLNP (94 aa)). N-linked (GlcNAc...) asparagine glycans are attached at residues Asn120, Asn131, Asn178, and Asn185. Positions 142 to 224 (CYSCMGLSRE…GSCCQGPRCN (83 aa)) constitute a UPAR/Ly6 2 domain. The segment covering 236–249 (RIPPLVLLPPPTTP) has biased composition (pro residues). The segment at 236 to 330 (RIPPLVLLPP…KGGAQIPSKG (95 aa)) is disordered. The segment covering 250–285 (APSTRTQNSSSTTSTTAPTTATTTIKPTTVQASHTS) has biased composition (low complexity). Composition is skewed to basic and acidic residues over residues 286–300 (STHETEHEVIQEEGS) and 309–320 (HQDRSNMGKFPE). The GPI-anchor amidated glycine moiety is linked to residue Gly330. A propeptide spans 331 to 352 (GSDALGSWLSAILLTVVAGAML) (removed in mature form).

Interacts with AGR2 and AGR3. Binds laminin-1 and laminin-5. Interacts with LGALS3. Found predominantly on the basal layers of squamous epithelium. Expressed in the gravid uterus and on epithelial of the upper gastrointestinal tract. It has been found in tumor lines which metastasize via the lymphatic system.

The protein resides in the cell membrane. Its function is as follows. Supports cell migration. May be involved in tumor progression. The chain is Ly6/PLAUR domain-containing protein 3 (Lypd3) from Rattus norvegicus (Rat).